Consider the following 1863-residue polypeptide: MDLSALRVEEVQNVINAMQKILECPICLELIKEPVSTKCDHIFCKFCMLKLLNQKKGPSQCPLCKNDITKRSLQESTRFSQLVEELLKIICAFQLDTGLEYANSYNFAKKENNSPEHLKDEVSIIQSMGYRNRAKRLLQSEPENPSLQETSLSVQLSNLGTVRTLRTKQRIQPQKKSVYIELGSDSSEDTVNKATYCSVGDQELLQITPQGTRDEISLDSAKKAACEFSETDVTNTEHHQPSNNDLNTTEKRATERHPEKYQGSSVSNLHVEPCGTNTHASSLQHENSSLLLTKDRMNVEKAEFCNKSKQPGLARSQHNRWAGSKETCNDRRTPSTEKKVDLNADPLCERKEWNKQKLPCSENPRDTEDVPWITLNSSIQKVNEWFSRSDELLGSDDSHDGGSESNAKVADVLDVLNEVDEYSGSSEKIDLLASDPHEALICKSERVHSKSVESNTEDKIFGKTYRRKASLPNLSHVTENLIIGAFVTEPQIIQERPLTNKLKRKRRATSGLHPEDFIKKADLAVQKTPEMINQGTNQMEQNGQVMNITNSGHENKTKGDSIQNEKNPNPIESLEKESAFKTKAEPISSSISNMELELNIHNSKAPKKNRLRRKSSTRHIHALELVVSRNLSPPNCTELQIDSCSSSEEIKKKKYNQMPVRHSRNLQLMEDKEPATGVKKSNKPNEQTSKRHDSDTFPELKLTNAPGSFTNCSNTSELKEFVNPSLPREEKEEKLETVKVSNNAEDPKDLMLSGERVLQTERSVESSSISLVPGTDYGTQESISLLEVSTLGKAKTEPNKCVSQCAAFENPKGLIHGCSKDTRNDTEGFKYPLGHEVNHSRETSIEMEESELDAQYLQNTFKVSKRQSFALFSNPGNPEEECATFSAHCRSLKKQSPKVTFEREQKEQNQGKNESNIKPVQTVNITAGFPVVCQKDKPVDYAKCSIKGGSRFCLSSQFRGNETGLITPNKHGLLQNPYHIPPLFPIKSFVKTKCKKNLLEENFEEHSMSPEREMGNENIPSTVSTISRNNIRENVFKEASSSNINEVGSSTNEVGSSINEVGSSDENIQAELGRNRGPKLNAMLRLGVLQPEVYKQSLPGSNCKHPEIKKQEYEEVVQTVNTDFSPCLISDNLEQPMGSSHASQVCSETPDDLLDDGEIKEDTSFAENDIKESSAVFSKSVQRGELSRSPSPFTHTHLAQGYRRGAKKLESSEENLSSEDEELPCFQHLLFGKVSNIPSQSTRHSTVATECLSKNTEENLLSLKNSLNDCSNQVILAKASQEHHLSEETKCSASLFSSQCSELEDLTANTNTQDPFLIGSSKQMRHQSESQGVGLSDKELVSDDEERGTGLEENNQEEQSMDSNLGEAASGCESETSVSEDCSGLSSQSDILTTQQRDTMQDNLIKLQQEMAELEAVLEQHGSQPSNSYPSIISDSSALEDLQNPEQSTSEKAVLTSQKSSEYPISQNPEGLSADKFEVSADSSTSKNKEPGVERSSPSKCPSLDDRWYMHSCSGSLQNRNYPSQEELIKVVDVEEQQLEESGPHDLTETSYLPRQDLEGTPYLESGISLFSDDPESDPSEDKAPESAHVGNIPSSTSALKVPQLKVAESAQSPAAAHTTNTAGYNAMEESVSREKPELTASTERVNKRMSMVVSGLTPEEFMLVYKFARKHHITLTNLITEETTHVVMKTDAEFVCERTLKYFLGIAGGKWVVSYFWVTQSIKERKMLNEHDFEVRGDVVNGRNHQGPKRARESQDRKIFRGLEICCYGPFTNMPTDQLEWMVQLCGASVVKELSSFTLGTGVHPIVVVQPDAWTEDNGFHAIGQMCEAPVVTREWVLDSVALYQCQELDTYLIPQIPHSHY.

Methionine 1 carries the N-acetylmethionine modification. An RING-type zinc finger spans residues 24–65 (CPICLELIKEPVSTKCDHIFCKFCMLKLLNQKKGPSQCPLCK). Lysine 109 participates in a covalent cross-link: Glycyl lysine isopeptide (Lys-Gly) (interchain with G-Cter in SUMO2). Serine 114 carries the post-translational modification Phosphoserine. The segment at 230-267 (ETDVTNTEHHQPSNNDLNTTEKRATERHPEKYQGSSVS) is disordered. The segment covering 248–260 (TTEKRATERHPEK) has biased composition (basic and acidic residues). A Glycyl lysine isopeptide (Lys-Gly) (interchain with G-Cter in SUMO2) cross-link involves residue lysine 301. A disordered region spans residues 306–338 (NKSKQPGLARSQHNRWAGSKETCNDRRTPSTEK). Basic and acidic residues predominate over residues 327 to 338 (TCNDRRTPSTEK). A Glycyl lysine isopeptide (Lys-Gly) (interchain with G-Cter in SUMO2) cross-link involves residue lysine 339. Phosphoserine occurs at positions 395, 398, 423, and 434. Residues lysine 443, lysine 459, and lysine 519 each participate in a glycyl lysine isopeptide (Lys-Gly) (interchain with G-Cter in SUMO2) cross-link. Serine 551 carries the phosphoserine modification. Glycyl lysine isopeptide (Lys-Gly) (interchain with G-Cter in SUMO2) cross-links involve residues lysine 583 and lysine 654. Residues 650-739 (IKKKKYNQMP…EKEEKLETVK (90 aa)) form a disordered region. A phosphoserine mark is found at serine 694, serine 708, and serine 725. The span at 705-716 (APGSFTNCSNTS) shows a compositional bias: polar residues. Residues 727 to 737 (PREEKEEKLET) are compositionally biased toward basic and acidic residues. Glycyl lysine isopeptide (Lys-Gly) (interchain with G-Cter in SUMO2) cross-links involve residues lysine 734 and lysine 739. A phosphoserine mark is found at serine 753 and serine 840. The segment at 896 to 915 (SPKVTFEREQKEQNQGKNES) is disordered. A compositionally biased stretch (basic and acidic residues) spans 900 to 909 (TFEREQKEQN). Glycyl lysine isopeptide (Lys-Gly) (interchain with G-Cter in SUMO2) cross-links involve residues lysine 918 and lysine 987. A Phosphoserine; by CHEK2 modification is found at serine 988. At serine 1009 the chain carries Phosphoserine. Lysine 1079 is covalently cross-linked (Glycyl lysine isopeptide (Lys-Gly) (interchain with G-Cter in SUMO2)). 11 positions are modified to phosphoserine: serine 1143, serine 1189, serine 1191, serine 1211, serine 1217, serine 1218, serine 1280, serine 1328, serine 1336, serine 1342, and serine 1387. The segment at 1181–1216 (VQRGELSRSPSPFTHTHLAQGYRRGAKKLESSEENL) is disordered. A disordered region spans residues 1322-1395 (KQMRHQSESQ…SSQSDILTTQ (74 aa)). Polar residues predominate over residues 1373–1395 (ESETSVSEDCSGLSSQSDILTTQ). The residue at position 1394 (threonine 1394) is a Phosphothreonine. An interaction with PALB2 region spans residues 1397-1424 (RDTMQDNLIKLQQEMAELEAVLEQHGSQ). Residues serine 1423, serine 1457, serine 1524, and serine 1542 each carry the phosphoserine modification. The disordered stretch occupies residues 1440–1505 (EDLQNPEQST…SSPSKCPSLD (66 aa)). Residues 1444–1470 (NPEQSTSEKAVLTSQKSSEYPISQNPE) show a composition bias toward polar residues. The disordered stretch occupies residues 1565 to 1642 (ESGISLFSDD…SREKPELTAS (78 aa)). Residues 1610–1624 (SAQSPAAAHTTNTAG) are compositionally biased toward polar residues. 2 consecutive BRCT domains span residues 1642–1736 (STER…DFEV) and 1756–1855 (QDRK…TYLI).

As to quaternary structure, heterodimer with BARD1. Part of the BRCA1-associated genome surveillance complex (BASC), which contains BRCA1, MSH2, MSH6, MLH1, ATM, BLM, PMS2 and the MRE11-RAD50-NBN protein (MRN) complex. This association could be a dynamic process changing throughout the cell cycle and within subnuclear domains. Component of the BRCA1-A complex, at least composed of BRCA1, BARD1, UIMC1/RAP80, ABRAXAS1, BRCC3/BRCC36, BABAM2 and BABAM1/NBA1. Interacts (via the BRCT domains) with ABRAXAS1 (phosphorylated form); this is important for recruitment to sites of DNA damage. Can form a heterotetramer with two molecules of ABRAXAS1 (phosphorylated form). Component of the BRCA1-RBBP8 complex. Interacts (via the BRCT domains) with RBBP8 ('Ser-327' phosphorylated form); the interaction ubiquitinates RBBP8, regulates CHEK1 activation, and involves RBBP8 in BRCA1-dependent G2/M checkpoint control on DNA damage. Associates with RNA polymerase II holoenzyme. Interacts with SMC1A, NELFB, DCLRE1C, CLSPN. CHEK1, CHEK2, BAP1, BRCC3, UBXN1 and PCLAF. Interacts (via BRCT domains) with BRIP1 (phosphorylated form). Interacts with FANCD2 (ubiquitinated form). Interacts with H2AX (phosphorylated on 'Ser-140'). Interacts (via the BRCT domains) with ACACA (phosphorylated form); the interaction prevents dephosphorylation of ACACA. Part of a BRCA complex containing BRCA1, BRCA2 and PALB2. Interacts directly with PALB2; the interaction is essential for its function in HRR. Interacts directly with BRCA2; the interaction occurs only in the presence of PALB2 which serves as the bridging protein. Interacts (via the BRCT domains) with LMO4; the interaction represses the transcriptional activity of BRCA1. Interacts (via the BRCT domains) with CCAR2 (via N-terminus); the interaction represses the transcriptional activator activity of BRCA1. Interacts with EXD2. Interacts (via C-terminus) with DHX9; this interaction is direct and links BRCA1 to the RNA polymerase II holoenzyme. Interacts with DNA helicase ZGRF1; the interaction is increased following DNA damage induction. Post-translationally, phosphorylated in response to IR, UV, and various stimuli that cause checkpoint activation, probably by ATM or ATR. Phosphorylation at Ser-988 by CHEK2 regulates mitotic spindle assembly. Phosphorylation by AURKA regulates centrosomal microtubule nucleation. Autoubiquitinated, undergoes 'Lys-6'-linked polyubiquitination. 'Lys-6'-linked polyubiquitination does not promote degradation.

It localises to the nucleus. The protein resides in the chromosome. The protein localises to the cytoplasm. The catalysed reaction is S-ubiquitinyl-[E2 ubiquitin-conjugating enzyme]-L-cysteine + [acceptor protein]-L-lysine = [E2 ubiquitin-conjugating enzyme]-L-cysteine + N(6)-ubiquitinyl-[acceptor protein]-L-lysine.. Functionally, E3 ubiquitin-protein ligase that specifically mediates the formation of 'Lys-6'-linked polyubiquitin chains and plays a central role in DNA repair by facilitating cellular responses to DNA damage. It is unclear whether it also mediates the formation of other types of polyubiquitin chains. The BRCA1-BARD1 heterodimer coordinates a diverse range of cellular pathways such as DNA damage repair, ubiquitination and transcriptional regulation to maintain genomic stability. Regulates centrosomal microtubule nucleation. Required for appropriate cell cycle arrests after ionizing irradiation in both the S-phase and the G2 phase of the cell cycle. Required for FANCD2 targeting to sites of DNA damage. Inhibits lipid synthesis by binding to inactive phosphorylated ACACA and preventing its dephosphorylation. Contributes to homologous recombination repair (HRR) via its direct interaction with PALB2, fine-tunes recombinational repair partly through its modulatory role in the PALB2-dependent loading of BRCA2-RAD51 repair machinery at DNA breaks. Component of the BRCA1-RBBP8 complex which regulates CHEK1 activation and controls cell cycle G2/M checkpoints on DNA damage via BRCA1-mediated ubiquitination of RBBP8. Acts as a transcriptional activator. In Pan troglodytes (Chimpanzee), this protein is Breast cancer type 1 susceptibility protein homolog (BRCA1).